Consider the following 838-residue polypeptide: uncharacterized protein (838 aa).

This is an uncharacterized protein from Rickettsia conorii (strain ATCC VR-613 / Malish 7).